The following is a 268-amino-acid chain: Putative hydro-lyase PSPTO_5379 (268 aa).

This sequence belongs to the D-glutamate cyclase family.

This is Putative hydro-lyase PSPTO_5379 from Pseudomonas syringae pv. tomato (strain ATCC BAA-871 / DC3000).